The chain runs to 87 residues: Small ribosomal subunit protein bS16 (87 aa).

It belongs to the bacterial ribosomal protein bS16 family.

The chain is Small ribosomal subunit protein bS16 from Onion yellows phytoplasma (strain OY-M).